Consider the following 214-residue polypeptide: Molybdenum cofactor guanylyltransferase (214 aa).

GTP-binding positions include 18-20 (LAG), Lys31, Asp77, and Asp112. Residue Asp112 participates in Mg(2+) binding.

This sequence belongs to the MobA family. As to quaternary structure, monomer. It depends on Mg(2+) as a cofactor.

The protein localises to the cytoplasm. The catalysed reaction is Mo-molybdopterin + GTP + H(+) = Mo-molybdopterin guanine dinucleotide + diphosphate. Transfers a GMP moiety from GTP to Mo-molybdopterin (Mo-MPT) cofactor (Moco or molybdenum cofactor) to form Mo-molybdopterin guanine dinucleotide (Mo-MGD) cofactor. The protein is Molybdenum cofactor guanylyltransferase of Rhodopseudomonas palustris (strain HaA2).